We begin with the raw amino-acid sequence, 277 residues long: Large ribosomal subunit protein uL2c (277 aa).

Residues 225-277 (MNPCDHPHGGGEGRSPIGRPKPVTPWGKPALGKKTRSPKRFSNKYIIRSRKMV) form a disordered region. A compositionally biased stretch (basic residues) spans 255 to 277 (LGKKTRSPKRFSNKYIIRSRKMV).

The protein belongs to the universal ribosomal protein uL2 family. Part of the 50S ribosomal subunit.

It is found in the plastid. It localises to the chloroplast. The sequence is that of Large ribosomal subunit protein uL2c (rpl2) from Euglena gracilis.